We begin with the raw amino-acid sequence, 1399 residues long: DNA-directed RNA polymerase subunit beta' (1399 aa).

The Zn(2+) site is built by Cys70, Cys72, Cys85, and Cys88. Mg(2+) is bound by residues Asp460, Asp462, and Asp464. Zn(2+) is bound by residues Cys814, Cys888, Cys895, and Cys898.

It belongs to the RNA polymerase beta' chain family. In terms of assembly, the RNAP catalytic core consists of 2 alpha, 1 beta, 1 beta' and 1 omega subunit. When a sigma factor is associated with the core the holoenzyme is formed, which can initiate transcription. Requires Mg(2+) as cofactor. Zn(2+) is required as a cofactor.

The catalysed reaction is RNA(n) + a ribonucleoside 5'-triphosphate = RNA(n+1) + diphosphate. Functionally, DNA-dependent RNA polymerase catalyzes the transcription of DNA into RNA using the four ribonucleoside triphosphates as substrates. The chain is DNA-directed RNA polymerase subunit beta' from Stutzerimonas stutzeri (strain A1501) (Pseudomonas stutzeri).